The sequence spans 481 residues: Glutamate--tRNA ligase (481 aa).

The 'HIGH' region motif lies at 9–19 (PSPTGNLHIGT). Positions 247–251 (KLSKR) match the 'KMSKS' region motif. Residue Lys-250 participates in ATP binding.

The protein belongs to the class-I aminoacyl-tRNA synthetase family. Glutamate--tRNA ligase type 1 subfamily. Monomer.

It is found in the cytoplasm. It carries out the reaction tRNA(Glu) + L-glutamate + ATP = L-glutamyl-tRNA(Glu) + AMP + diphosphate. Catalyzes the attachment of glutamate to tRNA(Glu) in a two-step reaction: glutamate is first activated by ATP to form Glu-AMP and then transferred to the acceptor end of tRNA(Glu). The sequence is that of Glutamate--tRNA ligase from Nostoc punctiforme (strain ATCC 29133 / PCC 73102).